A 465-amino-acid chain; its full sequence is Alpha-2A adrenergic receptor (465 aa).

Residues 1 to 48 (MFRQEQPLAEGSFAPMGSLQPDAGNASWNGTEAPGGGARATPYSLQVT) are Extracellular-facing. N-linked (GlcNAc...) asparagine glycans are attached at residues asparagine 25 and asparagine 29. A helical transmembrane segment spans residues 49-74 (LTLVCLAGLLMLLTVFGNVLVIIAVF). Topologically, residues 75–85 (TSRALKAPQNL) are cytoplasmic. A helical transmembrane segment spans residues 86-111 (FLVSLASADILVATLVIPFSLANEVM). Residues 112 to 121 (GYWYFGKAWC) are Extracellular-facing. A disulfide bond links cysteine 121 and cysteine 203. A helical membrane pass occupies residues 122–144 (EIYLALDVLFCTSSIVHLCAISL). The Cytoplasmic portion of the chain corresponds to 145–166 (DRYWSITQAIEYNLKRTPRRIK). Residues 167–187 (AIIITVWVISAVISFPPLISI) form a helical membrane-spanning segment. Topologically, residues 188-209 (EKKGGGGGPQPAEPRCEINDQK) are extracellular. Residues 210–232 (WYVISSCIGSFFAPCLIMILVYV) form a helical membrane-spanning segment. Over 233-389 (RIYQIAKRRT…RQNREKRFTF (157 aa)) the chain is Cytoplasmic. A disordered region spans residues 242 to 368 (TRVPPSRRGP…TPAAGPGEER (127 aa)). The span at 313-330 (SSDHAERPPGPRRPERGP) shows a compositional bias: basic and acidic residues. Serine 346 is subject to Phosphoserine. Arginine 368 is modified (omega-N-methylarginine). Residues 390–410 (VLAVVIGVFVVCWFPFFFTYT) traverse the membrane as a helical segment. The Extracellular segment spans residues 411–424 (LTAVGCSVPRTLFK). A helical membrane pass occupies residues 425–444 (FFFWFGYCNSSLNPVIYTIF). Residues 445-465 (NHDFRRAFKKILCRGDRKRIV) are Cytoplasmic-facing. The S-palmitoyl cysteine moiety is linked to residue cysteine 457.

This sequence belongs to the G-protein coupled receptor 1 family. Adrenergic receptor subfamily. ADRA2A sub-subfamily.

It is found in the cell membrane. Functionally, alpha-2 adrenergic receptors mediate the catecholamine-induced inhibition of adenylate cyclase through the action of G proteins. The rank order of potency for agonists of this receptor is oxymetazoline &gt; clonidine &gt; epinephrine &gt; norepinephrine &gt; phenylephrine &gt; dopamine &gt; p-synephrine &gt; p-tyramine &gt; serotonin = p-octopamine. For antagonists, the rank order is yohimbine &gt; phentolamine = mianserine &gt; chlorpromazine = spiperone = prazosin &gt; propanolol &gt; alprenolol = pindolol. In Homo sapiens (Human), this protein is Alpha-2A adrenergic receptor.